The following is a 632-amino-acid chain: Putative acetyl-CoA decarbonylase/synthase complex subunit alpha-like (632 aa).

His-200, His-226, Cys-263, Cys-379, Cys-408, and Cys-438 together coordinate [Ni-4Fe-4S] cluster.

It belongs to the Ni-containing carbon monoxide dehydrogenase family.

Its function is as follows. Part of the ACDS complex that catalyzes the reversible cleavage of acetyl-CoA, allowing autotrophic growth from CO(2). The alpha-epsilon subcomponent functions as a carbon monoxide dehydrogenase. The sequence is that of Putative acetyl-CoA decarbonylase/synthase complex subunit alpha-like (cdhA2) from Methanopyrus kandleri (strain AV19 / DSM 6324 / JCM 9639 / NBRC 100938).